Reading from the N-terminus, the 351-residue chain is Phosphoribosylformylglycinamidine cyclo-ligase (351 aa).

It belongs to the AIR synthase family.

It localises to the cytoplasm. The catalysed reaction is 2-formamido-N(1)-(5-O-phospho-beta-D-ribosyl)acetamidine + ATP = 5-amino-1-(5-phospho-beta-D-ribosyl)imidazole + ADP + phosphate + H(+). It functions in the pathway purine metabolism; IMP biosynthesis via de novo pathway; 5-amino-1-(5-phospho-D-ribosyl)imidazole from N(2)-formyl-N(1)-(5-phospho-D-ribosyl)glycinamide: step 2/2. This chain is Phosphoribosylformylglycinamidine cyclo-ligase, found in Synechococcus sp. (strain JA-3-3Ab) (Cyanobacteria bacterium Yellowstone A-Prime).